Reading from the N-terminus, the 130-residue chain is uncharacterized protein (130 aa).

The next 3 membrane-spanning stretches (helical) occupy residues 34-54 (AILI…FAFF), 73-93 (LLLT…GWLA), and 107-127 (FGTG…IVWI).

Its subcellular location is the cell membrane. This is an uncharacterized protein from Mycoplasma pneumoniae (strain ATCC 29342 / M129 / Subtype 1) (Mycoplasmoides pneumoniae).